A 387-amino-acid polypeptide reads, in one-letter code: 3-ketoacyl-CoA thiolase (387 aa).

Catalysis depends on cysteine 91, which acts as the Acyl-thioester intermediate. Active-site proton acceptor residues include histidine 343 and cysteine 373.

The protein belongs to the thiolase-like superfamily. Thiolase family. Heterotetramer of two alpha chains (FadB) and two beta chains (FadA).

The protein localises to the cytoplasm. It catalyses the reaction an acyl-CoA + acetyl-CoA = a 3-oxoacyl-CoA + CoA. Its pathway is lipid metabolism; fatty acid beta-oxidation. Catalyzes the final step of fatty acid oxidation in which acetyl-CoA is released and the CoA ester of a fatty acid two carbons shorter is formed. In Klebsiella pneumoniae subsp. pneumoniae (strain ATCC 700721 / MGH 78578), this protein is 3-ketoacyl-CoA thiolase.